A 334-amino-acid chain; its full sequence is Transcription initiation factor IIB (334 aa).

Residues 34 to 65 (TETVCPECGGRQLVHDYERAELVCQSCGLVID) form a TFIIB-type zinc finger. Zn(2+) is bound by residues Cys38, Cys41, Cys57, and Cys60. 2 tandem repeats follow at residues 151–234 (SELD…SREL) and 245–326 (DYVP…ELAE).

It belongs to the TFIIB family.

In terms of biological role, stabilizes TBP binding to an archaeal box-A promoter. Also responsible for recruiting RNA polymerase II to the pre-initiation complex (DNA-TBP-TFIIB). In Methanoregula boonei (strain DSM 21154 / JCM 14090 / 6A8), this protein is Transcription initiation factor IIB.